Consider the following 248-residue polypeptide: Triosephosphate isomerase (248 aa).

Residues Asn10 and Lys12 each contribute to the substrate site. The active-site Electrophile is the His95. Glu165 serves as the catalytic Proton acceptor.

Belongs to the triosephosphate isomerase family. In terms of assembly, homodimer.

The enzyme catalyses D-glyceraldehyde 3-phosphate = dihydroxyacetone phosphate. The protein operates within carbohydrate biosynthesis; gluconeogenesis. It participates in carbohydrate degradation; glycolysis; D-glyceraldehyde 3-phosphate from glycerone phosphate: step 1/1. This chain is Triosephosphate isomerase (TPI1), found in Zygosaccharomyces bailii.